Consider the following 471-residue polypeptide: Argininosuccinate lyase (471 aa).

It belongs to the lyase 1 family. Argininosuccinate lyase subfamily.

It localises to the cytoplasm. It carries out the reaction 2-(N(omega)-L-arginino)succinate = fumarate + L-arginine. Its pathway is amino-acid biosynthesis; L-arginine biosynthesis; L-arginine from L-ornithine and carbamoyl phosphate: step 3/3. The sequence is that of Argininosuccinate lyase from Ehrlichia canis (strain Jake).